Reading from the N-terminus, the 1368-residue chain is DNA-directed RNA polymerase subunit beta (1368 aa).

Belongs to the RNA polymerase beta chain family. As to quaternary structure, the RNAP catalytic core consists of 2 alpha, 1 beta, 1 beta' and 1 omega subunit. When a sigma factor is associated with the core the holoenzyme is formed, which can initiate transcription.

The catalysed reaction is RNA(n) + a ribonucleoside 5'-triphosphate = RNA(n+1) + diphosphate. Its function is as follows. DNA-dependent RNA polymerase catalyzes the transcription of DNA into RNA using the four ribonucleoside triphosphates as substrates. The sequence is that of DNA-directed RNA polymerase subunit beta from Burkholderia ambifaria (strain MC40-6).